The primary structure comprises 290 residues: 4-hydroxybenzoate octaprenyltransferase (290 aa).

6 helical membrane-spanning segments follow: residues 41–61, 89–109, 133–153, 158–178, 202–224, and 269–289; these read WPLV…GCAM, WEAV…ILPL, FFAI…PMAF, GTVP…SVAY, FGRF…YAWI, and WLGG…GAAG.

It belongs to the UbiA prenyltransferase family. The cofactor is Mg(2+).

The protein resides in the cell inner membrane. It catalyses the reaction all-trans-octaprenyl diphosphate + 4-hydroxybenzoate = 4-hydroxy-3-(all-trans-octaprenyl)benzoate + diphosphate. The protein operates within cofactor biosynthesis; ubiquinone biosynthesis. Its function is as follows. Catalyzes the prenylation of para-hydroxybenzoate (PHB) with an all-trans polyprenyl group. Mediates the second step in the final reaction sequence of ubiquinone-8 (UQ-8) biosynthesis, which is the condensation of the polyisoprenoid side chain with PHB, generating the first membrane-bound Q intermediate 3-octaprenyl-4-hydroxybenzoate. The polypeptide is 4-hydroxybenzoate octaprenyltransferase (Burkholderia vietnamiensis (strain G4 / LMG 22486) (Burkholderia cepacia (strain R1808))).